We begin with the raw amino-acid sequence, 245 residues long: 4-hydroxy-tetrahydrodipicolinate reductase (245 aa).

Residues 7–12 (GAKGKV), 75–77 (GTT), and 102–105 (APNF) contribute to the NAD(+) site. Catalysis depends on H132, which acts as the Proton donor/acceptor. H133 serves as a coordination point for (S)-2,3,4,5-tetrahydrodipicolinate. K136 acts as the Proton donor in catalysis. 142–143 (GT) is a (S)-2,3,4,5-tetrahydrodipicolinate binding site.

The protein belongs to the DapB family.

The protein localises to the cytoplasm. It carries out the reaction (S)-2,3,4,5-tetrahydrodipicolinate + NAD(+) + H2O = (2S,4S)-4-hydroxy-2,3,4,5-tetrahydrodipicolinate + NADH + H(+). It catalyses the reaction (S)-2,3,4,5-tetrahydrodipicolinate + NADP(+) + H2O = (2S,4S)-4-hydroxy-2,3,4,5-tetrahydrodipicolinate + NADPH + H(+). Its pathway is amino-acid biosynthesis; L-lysine biosynthesis via DAP pathway; (S)-tetrahydrodipicolinate from L-aspartate: step 4/4. Catalyzes the conversion of 4-hydroxy-tetrahydrodipicolinate (HTPA) to tetrahydrodipicolinate. In Mycobacterium sp. (strain KMS), this protein is 4-hydroxy-tetrahydrodipicolinate reductase.